The sequence spans 275 residues: Lectin (275 aa).

The first 30 residues, methionine 1 to serine 30, serve as a signal peptide directing secretion. D-glucose is bound by residues aspartate 111 and glycine 129. 2 residues coordinate Mn(2+): glutamate 149 and aspartate 151. Ca(2+) is bound by residues aspartate 151, phenylalanine 153, asparagine 155, and aspartate 159. Residues aspartate 159 and histidine 166 each coordinate Mn(2+). The propeptide occupies asparagine 211–asparagine 217. D-glucose is bound by residues glycine 246 and alanine 247. The propeptide occupies lysine 270–alanine 275.

The protein belongs to the leguminous lectin family. Heterotetramer of two alpha and two beta chains. Post-translationally, the mature form consists of two chains, alpha and beta, produced by cleavage of the immature protein. These remain cleaved, yet fold together to form one subunit.

Its function is as follows. D-mannose specific lectin. The chain is Lectin from Lens culinaris subsp. culinaris (Cultivated lentil).